The following is a 257-amino-acid chain: Snake venom serine protease rhinocerase 4 (257 aa).

A signal peptide spans 1 to 17; sequence VLIRVLANLLVLQLSYA. Positions 18–23 are excised as a propeptide; sequence QKSSEL. In terms of domain architecture, Peptidase S1 spans 24–248; that stretch reads VIGGAECNIN…YTDWIRSIIG (225 aa). Disulfide bonds link cysteine 30-cysteine 162, cysteine 49-cysteine 65, cysteine 97-cysteine 255, cysteine 141-cysteine 209, cysteine 173-cysteine 188, and cysteine 199-cysteine 224. N-linked (GlcNAc...) asparagine glycosylation is present at asparagine 43. Catalysis depends on histidine 64, which acts as the Charge relay system. Residues asparagine 78 and asparagine 100 are each glycosylated (N-linked (GlcNAc...) asparagine). Aspartate 109 acts as the Charge relay system in catalysis. Catalysis depends on serine 203, which acts as the Charge relay system. N-linked (GlcNAc...) asparagine glycosylation occurs at asparagine 250.

The protein belongs to the peptidase S1 family. Snake venom subfamily. Expressed by the venom gland.

It localises to the secreted. In terms of biological role, snake venom serine protease that may act in the hemostasis system of the prey. The polypeptide is Snake venom serine protease rhinocerase 4 (Bitis rhinoceros (West African gaboon viper)).